The primary structure comprises 259 residues: Tryptophan synthase alpha chain (259 aa).

Residues Glu52 and Asp63 each act as proton acceptor in the active site.

It belongs to the TrpA family. As to quaternary structure, tetramer of two alpha and two beta chains.

The catalysed reaction is (1S,2R)-1-C-(indol-3-yl)glycerol 3-phosphate + L-serine = D-glyceraldehyde 3-phosphate + L-tryptophan + H2O. The protein operates within amino-acid biosynthesis; L-tryptophan biosynthesis; L-tryptophan from chorismate: step 5/5. Its function is as follows. The alpha subunit is responsible for the aldol cleavage of indoleglycerol phosphate to indole and glyceraldehyde 3-phosphate. The protein is Tryptophan synthase alpha chain of Streptococcus gordonii (strain Challis / ATCC 35105 / BCRC 15272 / CH1 / DL1 / V288).